The sequence spans 876 residues: DNA mismatch repair protein MutS (876 aa).

626-633 (GPNMAGKS) lines the ATP pocket. Residues 829 to 856 (FRAAPPPPAPAAPPKASQVEERLRAIQP) form a disordered region. Positions 832–841 (APPPPAPAAP) are enriched in pro residues.

The protein belongs to the DNA mismatch repair MutS family.

In terms of biological role, this protein is involved in the repair of mismatches in DNA. It is possible that it carries out the mismatch recognition step. This protein has a weak ATPase activity. The chain is DNA mismatch repair protein MutS from Cereibacter sphaeroides (strain ATCC 17025 / ATH 2.4.3) (Rhodobacter sphaeroides).